Reading from the N-terminus, the 453-residue chain is Tubulin alpha-1/2/3 chain (453 aa).

Gln-11 is a GTP binding site. At Lys-40 the chain carries N6-acetyllysine. Glu-71, Ser-140, Gly-144, Thr-145, Thr-179, Asn-206, and Asn-228 together coordinate GTP. Glu-71 lines the Mg(2+) pocket. Residue Glu-254 is part of the active site. Positions 429-453 are disordered; sequence EKDYEEVGTESQEGDGEEGEDGGDQ. Acidic residues predominate over residues 431-453; that stretch reads DYEEVGTESQEGDGEEGEDGGDQ.

The protein belongs to the tubulin family. Dimer of alpha and beta chains. A typical microtubule is a hollow water-filled tube with an outer diameter of 25 nm and an inner diameter of 15 nM. Alpha-beta heterodimers associate head-to-tail to form protofilaments running lengthwise along the microtubule wall with the beta-tubulin subunit facing the microtubule plus end conferring a structural polarity. Microtubules usually have 13 protofilaments but different protofilament numbers can be found in some organisms and specialized cells. The cofactor is Mg(2+). Acetylation of alpha chains at Lys-40 stabilizes microtubules and affects affinity and processivity of microtubule motors. This modification has a role in multiple cellular functions, ranging from cell motility, cell cycle progression or cell differentiation to intracellular trafficking and signaling.

The protein localises to the cytoplasm. It is found in the cytoskeleton. The enzyme catalyses GTP + H2O = GDP + phosphate + H(+). Its function is as follows. Tubulin is the major constituent of microtubules, a cylinder consisting of laterally associated linear protofilaments composed of alpha- and beta-tubulin heterodimers. Microtubules grow by the addition of GTP-tubulin dimers to the microtubule end, where a stabilizing cap forms. Below the cap, tubulin dimers are in GDP-bound state, owing to GTPase activity of alpha-tubulin. In Naegleria gruberi (Amoeba), this protein is Tubulin alpha-1/2/3 chain (TBA1).